We begin with the raw amino-acid sequence, 172 residues long: Putative phosphoesterase BAMEG_3349 (172 aa).

The Proton donor role is filled by histidine 34. 2 consecutive short sequence motifs (HXTX) follow at residues 34-37 and 115-118; these read HITL and HLTI. Histidine 115 serves as the catalytic Proton acceptor.

It belongs to the 2H phosphoesterase superfamily. YjcG family.

The polypeptide is Putative phosphoesterase BAMEG_3349 (Bacillus anthracis (strain CDC 684 / NRRL 3495)).